Here is a 470-residue protein sequence, read N- to C-terminus: uncharacterized protein (470 aa).

In terms of domain architecture, SPX spans 1 to 337 (MKFGHDFKRA…SLTAQPLFFQ (337 aa)). Positions 118 to 145 (ASNVPSTPSDSTQQPPTNTLPSVSASSQ) are disordered. Residues 122-136 (PSTPSDSTQQPPTNT) show a composition bias toward low complexity. An RING-type zinc finger spans residues 374–413 (CAICSNVAYKPVRLGCSHVFCLHCLIILQKQKVDFCPLCR).

It localises to the cytoplasm. This is an uncharacterized protein from Schizosaccharomyces pombe (strain 972 / ATCC 24843) (Fission yeast).